We begin with the raw amino-acid sequence, 147 residues long: Ribonuclease VapC43 (147 aa).

The 137-residue stretch at 3–139 (CVDVNVLVYA…ARFRRLRWRH (137 aa)) folds into the PINc domain. Residues aspartate 5 and aspartate 108 each contribute to the Mg(2+) site.

The protein belongs to the PINc/VapC protein family. Mg(2+) serves as cofactor.

Its function is as follows. Toxic component of a type II toxin-antitoxin (TA) system. An RNase. Its toxic effect is neutralized by coexpression with cognate antitoxin VapB43. In Mycobacterium tuberculosis (strain CDC 1551 / Oshkosh), this protein is Ribonuclease VapC43.